A 419-amino-acid polypeptide reads, in one-letter code: UDP-N-acetylglucosamine 1-carboxyvinyltransferase (419 aa).

22-23 (KN) serves as a coordination point for phosphoenolpyruvate. Residue Arg95 participates in UDP-N-acetyl-alpha-D-glucosamine binding. Cys119 (proton donor) is an active-site residue. Residue Cys119 is modified to 2-(S-cysteinyl)pyruvic acid O-phosphothioketal. Residues 164 to 167 (KVSV), Asp308, and Ile330 each bind UDP-N-acetyl-alpha-D-glucosamine.

This sequence belongs to the EPSP synthase family. MurA subfamily.

Its subcellular location is the cytoplasm. The enzyme catalyses phosphoenolpyruvate + UDP-N-acetyl-alpha-D-glucosamine = UDP-N-acetyl-3-O-(1-carboxyvinyl)-alpha-D-glucosamine + phosphate. Its pathway is cell wall biogenesis; peptidoglycan biosynthesis. Functionally, cell wall formation. Adds enolpyruvyl to UDP-N-acetylglucosamine. In Rickettsia africae (strain ESF-5), this protein is UDP-N-acetylglucosamine 1-carboxyvinyltransferase.